Reading from the N-terminus, the 84-residue chain is Defensin-like protein 172 (84 aa).

The N-terminal stretch at 1 to 23 is a signal peptide; sequence MAKASSTLVLSIIFLVMFALVEQ. Intrachain disulfides connect C27–C74, C34–C56, C40–C68, and C44–C70.

This sequence belongs to the DEFL family.

It localises to the secreted. The polypeptide is Defensin-like protein 172 (LCR60) (Arabidopsis thaliana (Mouse-ear cress)).